The chain runs to 490 residues: Aspartyl/glutamyl-tRNA(Asn/Gln) amidotransferase subunit B (490 aa).

It belongs to the GatB/GatE family. GatB subfamily. Heterotrimer of A, B and C subunits.

The catalysed reaction is L-glutamyl-tRNA(Gln) + L-glutamine + ATP + H2O = L-glutaminyl-tRNA(Gln) + L-glutamate + ADP + phosphate + H(+). It carries out the reaction L-aspartyl-tRNA(Asn) + L-glutamine + ATP + H2O = L-asparaginyl-tRNA(Asn) + L-glutamate + ADP + phosphate + 2 H(+). Its function is as follows. Allows the formation of correctly charged Asn-tRNA(Asn) or Gln-tRNA(Gln) through the transamidation of misacylated Asp-tRNA(Asn) or Glu-tRNA(Gln) in organisms which lack either or both of asparaginyl-tRNA or glutaminyl-tRNA synthetases. The reaction takes place in the presence of glutamine and ATP through an activated phospho-Asp-tRNA(Asn) or phospho-Glu-tRNA(Gln). This Methylobacterium nodulans (strain LMG 21967 / CNCM I-2342 / ORS 2060) protein is Aspartyl/glutamyl-tRNA(Asn/Gln) amidotransferase subunit B.